A 416-amino-acid polypeptide reads, in one-letter code: Glutamyl-tRNA reductase (416 aa).

Residues 49-52 (TCNR), Ser105, 110-112 (EPQ), and Gln116 contribute to the substrate site. Cys50 serves as the catalytic Nucleophile. 185–190 (GAGETI) lines the NADP(+) pocket.

This sequence belongs to the glutamyl-tRNA reductase family. As to quaternary structure, homodimer.

It carries out the reaction (S)-4-amino-5-oxopentanoate + tRNA(Glu) + NADP(+) = L-glutamyl-tRNA(Glu) + NADPH + H(+). The protein operates within porphyrin-containing compound metabolism; protoporphyrin-IX biosynthesis; 5-aminolevulinate from L-glutamyl-tRNA(Glu): step 1/2. Catalyzes the NADPH-dependent reduction of glutamyl-tRNA(Glu) to glutamate 1-semialdehyde (GSA). In Shewanella sp. (strain MR-7), this protein is Glutamyl-tRNA reductase.